The primary structure comprises 203 residues: dITP/XTP pyrophosphatase (203 aa).

8–13 (TANKGK) contributes to the substrate binding site. Positions 41 and 70 each coordinate Mg(2+). The Proton acceptor role is filled by D70. Substrate is bound by residues S71, 153–156 (FGYD), K176, and 181–182 (HR).

It belongs to the HAM1 NTPase family. Homodimer. Mg(2+) serves as cofactor.

The catalysed reaction is XTP + H2O = XMP + diphosphate + H(+). It carries out the reaction dITP + H2O = dIMP + diphosphate + H(+). It catalyses the reaction ITP + H2O = IMP + diphosphate + H(+). Functionally, pyrophosphatase that catalyzes the hydrolysis of nucleoside triphosphates to their monophosphate derivatives, with a high preference for the non-canonical purine nucleotides XTP (xanthosine triphosphate), dITP (deoxyinosine triphosphate) and ITP. Seems to function as a house-cleaning enzyme that removes non-canonical purine nucleotides from the nucleotide pool, thus preventing their incorporation into DNA/RNA and avoiding chromosomal lesions. The chain is dITP/XTP pyrophosphatase from Listeria monocytogenes serovar 1/2a (strain ATCC BAA-679 / EGD-e).